The primary structure comprises 165 residues: MTDSNDPVVRGYLLQLIGEEGIEMIENMPEGEVTDEQIAEASGVMLNIVRRTLFIMNENNLAVCRRERDSSSGWLTYLWQLDLSDIESHLVKEKKRITKNLEIRYNFEVDSVFYTCPEGCVRFEFKEASKCEFMCPACGEDMMFEDNSVMVKKLRDRLDALEASS.

The HTH TFE/IIEalpha-type domain maps to 5–87; sequence NDPVVRGYLL…LWQLDLSDIE (83 aa).

This sequence belongs to the TFE family. In terms of assembly, monomer. Interaction with RNA polymerase subunits RpoF and RpoE is necessary for Tfe stimulatory transcription activity. Able to interact with Tbp and RNA polymerase in the absence of DNA promoter. Interacts both with the preinitiation and elongation complexes.

In terms of biological role, transcription factor that plays a role in the activation of archaeal genes transcribed by RNA polymerase. Facilitates transcription initiation by enhancing TATA-box recognition by TATA-box-binding protein (Tbp), and transcription factor B (Tfb) and RNA polymerase recruitment. Not absolutely required for transcription in vitro, but particularly important in cases where Tbp or Tfb function is not optimal. It dynamically alters the nucleic acid-binding properties of RNA polymerases by stabilizing the initiation complex and destabilizing elongation complexes. Seems to translocate with the RNA polymerase following initiation and acts by binding to the non template strand of the transcription bubble in elongation complexes. The polypeptide is Transcription factor E (Methanococcoides burtonii (strain DSM 6242 / NBRC 107633 / OCM 468 / ACE-M)).